The primary structure comprises 1406 residues: DNA-directed RNA polymerase subunit beta' (1406 aa).

C70, C72, C85, and C88 together coordinate Zn(2+). D460, D462, and D464 together coordinate Mg(2+). Positions 814, 888, 895, and 898 each coordinate Zn(2+).

It belongs to the RNA polymerase beta' chain family. The RNAP catalytic core consists of 2 alpha, 1 beta, 1 beta' and 1 omega subunit. When a sigma factor is associated with the core the holoenzyme is formed, which can initiate transcription. It depends on Mg(2+) as a cofactor. Requires Zn(2+) as cofactor.

The enzyme catalyses RNA(n) + a ribonucleoside 5'-triphosphate = RNA(n+1) + diphosphate. Its function is as follows. DNA-dependent RNA polymerase catalyzes the transcription of DNA into RNA using the four ribonucleoside triphosphates as substrates. This chain is DNA-directed RNA polymerase subunit beta', found in Yersinia enterocolitica serotype O:8 / biotype 1B (strain NCTC 13174 / 8081).